The sequence spans 375 residues: Histidine biosynthesis bifunctional protein HisB (375 aa).

The tract at residues Met-1–Pro-168 is histidinol-phosphatase. Asp-8 acts as the Nucleophile in catalysis. Mg(2+)-binding residues include Asp-8, Asp-10, and Asp-128. Asp-10 acts as the Proton donor in catalysis. The tract at residues Arg-169–Leu-375 is imidazoleglycerol-phosphate dehydratase.

In the N-terminal section; belongs to the histidinol-phosphatase family. This sequence in the C-terminal section; belongs to the imidazoleglycerol-phosphate dehydratase family. Mg(2+) is required as a cofactor.

The protein resides in the cytoplasm. It catalyses the reaction D-erythro-1-(imidazol-4-yl)glycerol 3-phosphate = 3-(imidazol-4-yl)-2-oxopropyl phosphate + H2O. It carries out the reaction L-histidinol phosphate + H2O = L-histidinol + phosphate. Its pathway is amino-acid biosynthesis; L-histidine biosynthesis; L-histidine from 5-phospho-alpha-D-ribose 1-diphosphate: step 6/9. It participates in amino-acid biosynthesis; L-histidine biosynthesis; L-histidine from 5-phospho-alpha-D-ribose 1-diphosphate: step 8/9. This Xanthomonas campestris pv. campestris (strain B100) protein is Histidine biosynthesis bifunctional protein HisB.